A 220-amino-acid chain; its full sequence is Octanoyltransferase (220 aa).

The BPL/LPL catalytic domain maps to 34–209; the sequence is ENSQDEIWVV…TLSQELGLAN (176 aa). Substrate-binding positions include 73–80, 140–142, and 153–155; these read RGGQVTYH, SLG, and GLA. The active-site Acyl-thioester intermediate is Cys-171.

The protein belongs to the LipB family.

The protein resides in the cytoplasm. It carries out the reaction octanoyl-[ACP] + L-lysyl-[protein] = N(6)-octanoyl-L-lysyl-[protein] + holo-[ACP] + H(+). It functions in the pathway protein modification; protein lipoylation via endogenous pathway; protein N(6)-(lipoyl)lysine from octanoyl-[acyl-carrier-protein]: step 1/2. In terms of biological role, catalyzes the transfer of endogenously produced octanoic acid from octanoyl-acyl-carrier-protein onto the lipoyl domains of lipoate-dependent enzymes. Lipoyl-ACP can also act as a substrate although octanoyl-ACP is likely to be the physiological substrate. This Shewanella piezotolerans (strain WP3 / JCM 13877) protein is Octanoyltransferase.